The primary structure comprises 264 residues: MHTLVFCSFKGGTGKTTLSLNVGCNLAQFLGKKVLLADLDPQSNLSSGLGASVRSNQKGLHDIVYTSNDLKSIICETKKDSVDLIPASFLSEQFRELDIHRGPSNNLKLFLNEYCAPFYDICIIDTPPSLGGLTKEAFVAGDKLIACLTPEPFSILGLQKIREFLSSVGKPEEEHILGIALSFWDDRNSTNQMYIDIIESIYKNKLFSTKIRRDISLSRSLLKEDSVANVYPNSRAAEDILKLTHEIANILHIEYERDYSQRTT.

Position 9-16 (9-16 (FKGGTGKT)) interacts with ATP.

This sequence belongs to the ParA family.

In terms of biological role, required for growth within mammalian cells. The sequence is that of Virulence plasmid ParA family protein pGP5-D from Chlamydia trachomatis.